Reading from the N-terminus, the 672-residue chain is APC membrane recruitment protein 2 (672 aa).

The span at 1 to 21 (METGRSRGGGAAVSERGGGAR) shows a compositional bias: gly residues. Disordered stretches follow at residues 1 to 23 (METG…ARAG), 74 to 360 (TMPS…DPSA), and 443 to 560 (MLSQ…DALC). A compositionally biased stretch (low complexity) spans 142 to 158 (GSLASSSVAKSHSFFSL). Ser154 is subject to Phosphoserine. Basic and acidic residues-rich tracts occupy residues 163 to 175 (GRSE…HAEA) and 201 to 210 (RGKEEEEKAV). Phosphoserine occurs at positions 223, 227, and 244. Basic and acidic residues predominate over residues 230 to 254 (CVKEEPPRAARRPDSPGQDASRHAA). Residues 255 to 269 (GEPAGGEQAPASAES) show a composition bias toward low complexity. Ser284 carries the post-translational modification Phosphoserine. Basic and acidic residues predominate over residues 289–303 (SRGEDAEGHRREEKP). The span at 343–354 (ASAVPDPSSVDP) shows a compositional bias: low complexity. 2 positions are modified to phosphoserine: Ser356 and Ser359. Residues 446–457 (QTEDQGQGTQEG) show a composition bias toward low complexity. Basic and acidic residues-rich tracts occupy residues 478 to 488 (RCGEAAKDMSS) and 502 to 516 (QQKE…EHQE).

This sequence belongs to the Amer family. In terms of assembly, interacts with APC.

Its subcellular location is the cell membrane. Negative regulator of the canonical Wnt signaling pathway involved in neuroectodermal patterning. Acts by specifically binding phosphatidylinositol 4,5-bisphosphate (PtdIns(4,5)P2), translocating to the cell membrane and interacting with key regulators of the canonical Wnt signaling pathway, such as components of the beta-catenin destruction complex. The sequence is that of APC membrane recruitment protein 2 (Amer2) from Mus musculus (Mouse).